Consider the following 491-residue polypeptide: Phosphoethanolamine N-methyltransferase 1 (491 aa).

A2 is modified (N-acetylalanine). S-adenosyl-L-homocysteine contacts are provided by G61, R66, D82, D107, V108, and N126. Phosphocholine is bound by residues S159, S164, G165, R169, and Y176. Residues 245 to 246 (QY) and Y254 contribute to the N-methylethanolamine phosphate site. Position 254 (Y254) interacts with phosphocholine. Residues V263, S264, G290, D312, D338, C339, and R355 each contribute to the S-adenosyl-L-homocysteine site. 5 residues coordinate phosphocholine: Y386, Y400, R404, Y406, and K472. Residues Y386, Y400, 404–406 (RGY), and K472 each bind N-methylethanolamine phosphate.

It belongs to the class I-like SAM-binding methyltransferase superfamily. PEAMT family. In terms of tissue distribution, highly expressed in the meristem and elongation zones of the root. Expressed in differentiated root epidermal cells. Highly expressed in leaf vasculature.

Its subcellular location is the cytoplasm. The catalysed reaction is phosphoethanolamine + S-adenosyl-L-methionine = N-methylethanolamine phosphate + S-adenosyl-L-homocysteine + H(+). The enzyme catalyses N-methylethanolamine phosphate + S-adenosyl-L-methionine = N,N-dimethylethanolamine phosphate + S-adenosyl-L-homocysteine + H(+). It catalyses the reaction N,N-dimethylethanolamine phosphate + S-adenosyl-L-methionine = phosphocholine + S-adenosyl-L-homocysteine + H(+). It participates in phospholipid metabolism; phosphatidylcholine biosynthesis; phosphocholine from phosphoethanolamine: step 1/1. Its function is as follows. Involved in phosphocholine biosynthesis. Catalyzes the N-methylation of phosphoethanolamine, phosphomonomethylethanolamine and phosphodimethylethanolamine, the three methylation steps required to convert phosphoethanolamine to phosphocholine (PC). Required for root system development and epidermal cell integrity through its role in choline and phospholipid metabolism. In association with NMT3, regulates PC homeostasis, phase transition at the shoot apex, coordinated organ development, and fertility. In association with NMT3, involved in phosphatidylcholine biosynthesis and vascular development. In association with NMT2, involved in the production of phosphatidylcholine in roots, essential for root development. In association with NMT2 produce phosphocholine mainly for leaf growth maintenance. Contributes to the regulation of overall root zonation dynamics through reactive oxygen species (ROS) and auxin-regulated cell differentiation. Participates in root development of primary root elongation under salt stress conditions by balancing reactive oxygen species (ROS) production and distribution through abscisic acid (ABA) signaling. This Arabidopsis thaliana (Mouse-ear cress) protein is Phosphoethanolamine N-methyltransferase 1.